A 45-amino-acid chain; its full sequence is Pollen allergen Amb a 5 (45 aa).

Intrachain disulfides connect cysteine 4/cysteine 39, cysteine 11/cysteine 26, cysteine 18/cysteine 32, and cysteine 19/cysteine 43.

As to quaternary structure, monomer.

The chain is Pollen allergen Amb a 5 from Ambrosia artemisiifolia var. elatior (Short ragweed).